Consider the following 123-residue polypeptide: Protein Wnt-7a (123 aa).

Residue Ser-1 is the site of O-palmitoleoyl serine; by PORCN attachment. Positions 33–61 are disordered linker; the sequence is VEPVRASRNKRPTFLKIKKPLSYLKPMDT. Cys-89 and Cys-104 form a disulfide bridge. An N-linked (GlcNAc...) asparagine glycan is attached at Asn-90.

It belongs to the Wnt family. Palmitoleoylation is required for efficient binding to frizzled receptors. Depalmitoleoylation leads to Wnt signaling pathway inhibition.

The protein localises to the secreted. The protein resides in the extracellular space. It is found in the extracellular matrix. Ligand for members of the frizzled family of seven transmembrane receptors that functions in the canonical Wnt/beta-catenin signaling pathway. Plays an important role in embryonic development, including dorsal versus ventral patterning during limb development, skeleton development and urogenital tract development. Required for central nervous system (CNS) angiogenesis and blood-brain barrier regulation. This chain is Protein Wnt-7a (WNT-7A), found in Plethodon jordani (Red-cheeked salamander).